Consider the following 244-residue polypeptide: NAD-dependent protein deacylase SIR2rp3 (244 aa).

Positions Met1–Gly239 constitute a Deacetylase sirtuin-type domain. Gly13–Trp32 contacts NAD(+). Tyr57 and Arg60 together coordinate substrate. Residue Gln95 to Asp98 coordinates NAD(+). His113 (proton acceptor) is an active-site residue. Zn(2+) contacts are provided by Cys121 and Cys141. Residues Gly181 to Ser183 and Ala225 each bind NAD(+).

Belongs to the sirtuin family. Class III subfamily. Zn(2+) is required as a cofactor.

The protein localises to the mitochondrion. It carries out the reaction N(6)-malonyl-L-lysyl-[protein] + NAD(+) + H2O = 2''-O-malonyl-ADP-D-ribose + nicotinamide + L-lysyl-[protein]. The catalysed reaction is N(6)-succinyl-L-lysyl-[protein] + NAD(+) + H2O = 2''-O-succinyl-ADP-D-ribose + nicotinamide + L-lysyl-[protein]. The enzyme catalyses N(6)-glutaryl-L-lysyl-[protein] + NAD(+) + H2O = 2''-O-glutaryl-ADP-D-ribose + nicotinamide + L-lysyl-[protein]. NAD-dependent lysine demalonylase, desuccinylase and deglutarylase that specifically removes malonyl, succinyl and glutaryl groups on target proteins. Has weak NAD-dependent protein deacetylase activity; however this activity may not be physiologically relevant in vivo. The polypeptide is NAD-dependent protein deacylase SIR2rp3 (SIR2rp3) (Trypanosoma brucei brucei (strain 927/4 GUTat10.1)).